The sequence spans 340 residues: 4-hydroxythreonine-4-phosphate dehydrogenase (340 aa).

The substrate site is built by histidine 141 and threonine 142. A divalent metal cation contacts are provided by histidine 171, histidine 216, and histidine 271. Positions 279, 288, and 297 each coordinate substrate.

The protein belongs to the PdxA family. In terms of assembly, homodimer. The cofactor is Zn(2+). Mg(2+) serves as cofactor. Co(2+) is required as a cofactor.

Its subcellular location is the cytoplasm. The catalysed reaction is 4-(phosphooxy)-L-threonine + NAD(+) = 3-amino-2-oxopropyl phosphate + CO2 + NADH. It participates in cofactor biosynthesis; pyridoxine 5'-phosphate biosynthesis; pyridoxine 5'-phosphate from D-erythrose 4-phosphate: step 4/5. Catalyzes the NAD(P)-dependent oxidation of 4-(phosphooxy)-L-threonine (HTP) into 2-amino-3-oxo-4-(phosphooxy)butyric acid which spontaneously decarboxylates to form 3-amino-2-oxopropyl phosphate (AHAP). The protein is 4-hydroxythreonine-4-phosphate dehydrogenase of Desulforapulum autotrophicum (strain ATCC 43914 / DSM 3382 / VKM B-1955 / HRM2) (Desulfobacterium autotrophicum).